The sequence spans 570 residues: NADPH oxidase 2 (570 aa).

Over 2 to 9 (GNWVVNEG) the chain is Cytoplasmic. The chain crosses the membrane as a helical span at residues 10–36 (ISIFVILVWLGMNVFLFVWYYRVYDIP). The Extracellular segment spans residues 37-46 (DKFFYTRKLL). Residues 47 to 72 (GSALALARAPAACLNFNCMLILLPVC) form a helical membrane-spanning segment. One can recognise a Ferric oxidoreductase domain in the interval 54–286 (RAPAACLNFN…MFLYLCERLV (233 aa)). Residues 73-95 (RNLLSFLRGSSACCSTRIRRQLD) lie on the Cytoplasmic side of the membrane. A helical membrane pass occupies residues 96–130 (RNLTFHKMVAWMIALHTAIHTIAHLFNVEWCVNAR). Heme b is bound by residues histidine 101 and histidine 115. The Extracellular portion of the chain corresponds to 131 to 163 (VNNSDPYSIALSDIGDKPNETYLNFVRQRIKNP). 2 N-linked (GlcNAc...) asparagine glycosylation sites follow: asparagine 132 and asparagine 149. Lysine 161 participates in a covalent cross-link: Glycyl lysine isopeptide (Lys-Gly) (interchain with G-Cter in ubiquitin). A helical membrane pass occupies residues 164 to 194 (EGGLYVAVTRLAGITGVVITLCLILIITSST). Residues 195–203 (KTIRRSYFE) are Cytoplasmic-facing. Positions 199 and 200 each coordinate FAD. A helical membrane pass occupies residues 204–222 (VFWYTHHLFVIFFIGLAIH). Positions 206, 209, 222, 226, and 227 each coordinate heme b. The Extracellular portion of the chain corresponds to 223 to 267 (GAQRIVRGQTAESLLKHQPRNCYQNISQWGKIENCPIPEFSGNPP). Asparagine 247 carries an N-linked (GlcNAc...) asparagine glycan. Heme b contacts are provided by methionine 268, tyrosine 280, and arginine 287. A helical membrane pass occupies residues 268-285 (MTWKWIVGPMFLYLCERL). At 286–570 (VRFWRSQQKV…VHFIFNKENF (285 aa)) the chain is on the cytoplasmic side. Residues 287–397 (RFWRSQQKVV…DGPFGTASED (111 aa)) enclose the FAD-binding FR-type domain. Glycyl lysine isopeptide (Lys-Gly) (interchain with G-Cter in ubiquitin) cross-links involve residues lysine 294, lysine 299, lysine 306, lysine 328, and lysine 334. The FAD site is built by tryptophan 337, histidine 338, proline 339, threonine 341, histidine 354, arginine 356, tryptophan 361, and threonine 362. Lysine 381 participates in a covalent cross-link: Glycyl lysine isopeptide (Lys-Gly) (interchain with G-Cter in ubiquitin). Isoleucine 411, arginine 446, and threonine 481 together coordinate NADPH. Residue lysine 506 forms a Glycyl lysine isopeptide (Lys-Gly) (interchain with G-Cter in ubiquitin) linkage. Residue arginine 513 participates in NADPH binding. Lysine 567 participates in a covalent cross-link: Glycyl lysine isopeptide (Lys-Gly) (interchain with G-Cter in ubiquitin).

Component of the phagocyte NADPH oxidase core complex/cytochrome b558 complex, composed of CYBB (heavy chain (beta)) and CYBA (light chain (alpha)). Component of the phagocyte NADPH oxidase complex composed of an obligatory core heterodimer formed by the membrane proteins CYBA and CYBB and the cytosolic regulatory subunits NCF1/p47-phox, NCF2/p67-phox, NCF4/p40-phox and the small GTPase RAC1 or RAC2. Interacts with NCF1 (phosphorylated form). Interacts with NCF2; the interaction is enhanced in the presence of GBP7. Interacts with RAC2. Interacts with RAC1. Interacts with calprotectin (S100A8/9). Interacts with NRROS; the interaction is direct and impairs formation of a stable NADPH oxidase complex. Interacts with CYBC1; CYBC1 may act as a chaperone stabilizing Cytochrome b-245 heterodimer. The CYBA-CYBB complex interacts with GBP7. It depends on FAD as a cofactor. Glycosylated. In terms of processing, phosphorylated on Ser and Thr residues by PKC during neutrophils activation. Phosphorylation enhances the NADPH oxidase activity and stimulates its interaction with RAC2, NCF2/p67-phox, and NCF1/p47-phox. Post-translationally, undergoes 'Lys-48'-linked polyubiquitination, likely by RNF145, triggering endoplasmic reticulum-associated degradation.

It is found in the cell membrane. The enzyme catalyses NADPH + 2 O2 = 2 superoxide + NADP(+) + H(+). Functionally, catalytic subunit of the phagocyte NADPH oxidase complex that mediates the transfer of electrons from cytosolic NADPH to O2 to produce the superoxide anion (O2(-)). In the activated complex, electrons are first transferred from NADPH to flavin adenine dinucleotide (FAD) and subsequently transferred via two heme molecules to molecular oxygen, producing superoxide through an outer-sphere reaction. Activation of the NADPH oxidase complex is initiated by the assembly of cytosolic subunits of the NADPH oxidase complex with the core NADPH oxidase complex to form a complex at the plasma membrane or phagosomal membrane. This activation process is initiated by phosphorylation dependent binding of the cytosolic NCF1/p47-phox subunit to the C-terminus of CYBA/p22-phox. NADPH oxidase complex assembly is impaired through interaction with NRROS. The protein is NADPH oxidase 2 of Bos taurus (Bovine).